Reading from the N-terminus, the 329-residue chain is UDP-2,3-diacylglucosamine pyrophosphatase LpxG (329 aa).

The chain crosses the membrane as a helical span at residues 2–24 (FVFVGSTVSLTAIVAAPVLTWIW). 6 residues coordinate a divalent metal cation: Asp59, His61, Asp91, Asn123, His257, and His259.

The protein belongs to the metallophosphoesterase superfamily. Mn(2+) serves as cofactor.

Its subcellular location is the cell inner membrane. The enzyme catalyses UDP-2,3-diacyl-alpha-D-glucosamine + H2O = 2,3-diacyl-alpha-D-glucosaminyl 1-phosphate + UMP + 2 H(+). Its pathway is glycolipid biosynthesis; lipid IV(A) biosynthesis. Its function is as follows. Hydrolyzes the pyrophosphate bond of UDP-2,3-diacylglucosamine to form 2,3-diacylglucosamine 1-phosphate (lipid X) and UMP by catalyzing the attack of water at the alpha-P atom. Involved in the biosynthesis of lipid A, a phosphorylated glycolipid that anchors the lipooligosaccharide (LOS) to the outer membrane of the cell. The chain is UDP-2,3-diacylglucosamine pyrophosphatase LpxG from Chlamydia muridarum (strain MoPn / Nigg).